The primary structure comprises 289 residues: ADP-polyphosphate phosphotransferase (289 aa).

It belongs to the polyphosphate kinase 2 (PPK2) family. Class I subfamily.

The catalysed reaction is [phosphate](n) + ATP = [phosphate](n+1) + ADP. Uses inorganic polyphosphate (polyP) as a donor to convert ADP to ATP. The chain is ADP-polyphosphate phosphotransferase from Rhodopseudomonas palustris (strain ATCC BAA-98 / CGA009).